Consider the following 87-residue polypeptide: U14-lycotoxin-Ls1a (87 aa).

Positions 1–20 (MNSKVFAVLLLLALSTCVLS) are cleaved as a signal peptide. The WAP domain occupies 21–66 (EKYCPTPRNTSCKKMNIRNNCCRDSDCTSNAFCCAEPCGNFCHKAS). 5 cysteine pairs are disulfide-bonded: Cys24–Cys54, Cys32–Cys58, Cys41–Cys53, Cys42–Cys80, and Cys47–Cys62.

The protein belongs to the venom protein 11 family. 01 (wap-1) subfamily. Post-translationally, contains 5 disulfide bonds. As to expression, expressed by the venom gland.

The protein localises to the secreted. Has antibacterial activity. The chain is U14-lycotoxin-Ls1a from Lycosa singoriensis (Wolf spider).